The sequence spans 179 residues: Stathmin-2 (179 aa).

The membrane attachment stretch occupies residues 1 to 26 (MAKTAMAYKEKMKELSMLSLICSCFY). Ser16 carries the phosphoserine modification. Residues Cys22 and Cys24 are each lipidated (S-palmitoyl cysteine). The SLD domain maps to 38–179 (DDMEVKQINK…NKELQVELSG (142 aa)). The tract at residues 39 to 96 (DMEVKQINKRASGQAFELILKPPSPISEAPRTLASPKKKDLSLEEIQKKLEAAEERRK) is regulatory/phosphorylation domain. 4 positions are modified to phosphoserine: Ser50, Ser62, Ser73, and Ser97. Residues 75-179 (KKKDLSLEEI…NKELQVELSG (105 aa)) are a coiled coil.

This sequence belongs to the stathmin family. In terms of assembly, interacts with MAPK8. Interacts with ITM2C. Interacts with KIFBP. Interacts (via the N-terminal region) with CIB1 (via C-terminal region); the interaction is direct, occurs in a calcium-dependent manner and attenuates the neurite outgrowth inhibition of STMN2. In terms of processing, sumoylated. Phosphorylated mostly by MAPK8, but also by MAPK9 and MAPK10 in the developing brain cortex. Post-translationally, N-terminal palmitoylation promotes specific anchoring to the cytosolic leaflet of Golgi membranes and subsequent vesicular trafficking along dendrites and axons. Neuronal Stathmins are substrates for palmitoyltransferases ZDHHC3, ZDHHC7 and ZDHHC15. As to expression, neuron specific.

Its subcellular location is the cytoplasm. The protein localises to the perinuclear region. It is found in the cell projection. It localises to the growth cone. The protein resides in the membrane. Its subcellular location is the axon. The protein localises to the golgi apparatus. It is found in the endosome. It localises to the lamellipodium. In terms of biological role, regulator of microtubule stability. When phosphorylated by MAPK8, stabilizes microtubules and consequently controls neurite length in cortical neurons. In the developing brain, negatively regulates the rate of exit from multipolar stage and retards radial migration from the ventricular zone. This is Stathmin-2 (STMN2) from Homo sapiens (Human).